A 1044-amino-acid polypeptide reads, in one-letter code: Carbamoyl phosphate synthase large chain (1044 aa).

The tract at residues 1–398 (MPKREDISKI…ALMKAIASLD (398 aa)) is carboxyphosphate synthetic domain. Residues Arg129, Arg169, Gly175, Gly176, Arg208, Leu210, Glu215, Gly241, Val242, His243, Gln284, and Glu296 each contribute to the ATP site. Residues 133–325 (HDFLISIGER…IARIAAKIAV (193 aa)) enclose the ATP-grasp 1 domain. Residues Gln284, Glu296, and Asn298 each contribute to the Mg(2+) site. Mn(2+)-binding residues include Gln284, Glu296, and Asn298. Residues 399–539 (IDLSYRLRLY…YSTYEDEDEL (141 aa)) form an oligomerization domain region. Residues 540-916 (PGISGFVAII…AIRKSILRDI (377 aa)) form a carbamoyl phosphate synthetic domain region. The 190-residue stretch at 665 to 854 (SKRLEAMGID…WVELAVSAIM (190 aa)) folds into the ATP-grasp 2 domain. Residues Arg701, Lys738, Leu740, Glu745, Gly770, Val771, His772, Ser773, Gln813, and Glu825 each coordinate ATP. Residues Gln813, Glu825, and Asn827 each contribute to the Mg(2+) site. Mn(2+)-binding residues include Gln813, Glu825, and Asn827. In terms of domain architecture, MGS-like spans 911 to 1044 (SILRDIKSVF…IDYREISSYH (134 aa)). The interval 916–1044 (IKSVFISVRD…IDYREISSYH (129 aa)) is allosteric domain.

The protein belongs to the CarB family. As to quaternary structure, composed of two chains; the small (or glutamine) chain promotes the hydrolysis of glutamine to ammonia, which is used by the large (or ammonia) chain to synthesize carbamoyl phosphate. Tetramer of heterodimers (alpha,beta)4. Requires Mg(2+) as cofactor. It depends on Mn(2+) as a cofactor.

It carries out the reaction hydrogencarbonate + L-glutamine + 2 ATP + H2O = carbamoyl phosphate + L-glutamate + 2 ADP + phosphate + 2 H(+). The catalysed reaction is hydrogencarbonate + NH4(+) + 2 ATP = carbamoyl phosphate + 2 ADP + phosphate + 2 H(+). It participates in amino-acid biosynthesis; L-arginine biosynthesis; carbamoyl phosphate from bicarbonate: step 1/1. It functions in the pathway pyrimidine metabolism; UMP biosynthesis via de novo pathway; (S)-dihydroorotate from bicarbonate: step 1/3. Functionally, large subunit of the glutamine-dependent carbamoyl phosphate synthetase (CPSase). CPSase catalyzes the formation of carbamoyl phosphate from the ammonia moiety of glutamine, carbonate, and phosphate donated by ATP, constituting the first step of 2 biosynthetic pathways, one leading to arginine and/or urea and the other to pyrimidine nucleotides. The large subunit (synthetase) binds the substrates ammonia (free or transferred from glutamine from the small subunit), hydrogencarbonate and ATP and carries out an ATP-coupled ligase reaction, activating hydrogencarbonate by forming carboxy phosphate which reacts with ammonia to form carbamoyl phosphate. This chain is Carbamoyl phosphate synthase large chain, found in Thermoplasma volcanium (strain ATCC 51530 / DSM 4299 / JCM 9571 / NBRC 15438 / GSS1).